We begin with the raw amino-acid sequence, 373 residues long: DNA primase small subunit PriS (373 aa).

Residues Asp-95, Asp-97, and Asp-281 contribute to the active site.

It belongs to the eukaryotic-type primase small subunit family. Heterodimer of a small subunit (PriS) and a large subunit (PriL). It depends on Mg(2+) as a cofactor. The cofactor is Mn(2+).

In terms of biological role, catalytic subunit of DNA primase, an RNA polymerase that catalyzes the synthesis of short RNA molecules used as primers for DNA polymerase during DNA replication. The small subunit contains the primase catalytic core and has DNA synthesis activity on its own. Binding to the large subunit stabilizes and modulates the activity, increasing the rate of DNA synthesis while decreasing the length of the DNA fragments, and conferring RNA synthesis capability. The DNA polymerase activity may enable DNA primase to also catalyze primer extension after primer synthesis. May also play a role in DNA repair. The protein is DNA primase small subunit PriS of Nitrosopumilus maritimus (strain SCM1).